Here is a 356-residue protein sequence, read N- to C-terminus: MKREILLERIDKLKQLMPWYVLEYYQSKLAVPYSFTTLYEYLKEYDRFFSWVLESGISNADKISDIPLSVLENMSKKDMESFILYXRERPLLNANTTKQGVSQTTINRTLSALSSLYKYLTEEVENDQGEPYFYRNVMKKVSTKKKKETLAARAENIKQKLFLGDETEGFLTYIDQEHPQQLSNRALSSFNKNKERDLAIIALLLASGVRLSEAVNLDLRDLNLKMMVIDVTRKGGKRDSVNVAAFAKPYLENYLAIRNQRYKTEKTDTALFLTLYRGVPNRIDASSVEKMVAKYSEDFKVRVTPHKLRHTLATRLYDATKSQVLVSHQLGHASTQVTDLYTHIVNDEQKNALDSL.

Residues 16-121 enclose the Core-binding (CB) domain; it reads LMPWYVLEYY…ALSSLYKYLT (106 aa). The Tyr recombinase domain maps to 169–354; the sequence is GFLTYIDQEH…VNDEQKNALD (186 aa). Active-site residues include R210, K234, H306, R309, and H332. The active-site O-(3'-phospho-DNA)-tyrosine intermediate is Y341.

This sequence belongs to the 'phage' integrase family. XerS subfamily.

It is found in the cytoplasm. Its activity is regulated as follows. FtsK is required for recombination. Functionally, site-specific tyrosine recombinase, which acts by catalyzing the cutting and rejoining of the recombining DNA molecules. Essential to convert dimers of the bacterial chromosome into monomers to permit their segregation at cell division. The sequence is that of Tyrosine recombinase XerS from Streptococcus pneumoniae serotype 19F (strain G54).